Consider the following 499-residue polypeptide: Putative antiporter subunit mnhD2 (499 aa).

Transmembrane regions (helical) follow at residues 3–23 (LSNLLILPMLLPFLCALILVF), 33–53 (YLYLGTMTITTIISLMLLIYV), 79–99 (LSLIMVTTASFVITLIMAYGF), 109–129 (YHLPSFILFLSVGVIGSFLTS), 131–151 (LFNLYVMFEIMLLASFVLITL), 162–182 (IIYVVLNIIGSWLFLLGIGLL), 210–230 (ISLIFLVAFSAKAALVLFMWL), 241–261 (LAALFAALMTKVGAYALIRFF), 272–292 (IHPLLATMAAITMVIGAIGVI), 309–329 (IGFIILGLGTNTFAGINGAIF), 331–351 (LVNDIVVKTLLFFIIGSLVYI), 370–390 (FGVAFIIMIFAIGGVPPFSGF), 404–424 (GNYIGLALMIITSLIAMYSLF), and 452–472 (ILSILVVVVIAIGIAAPVVLN).

This sequence belongs to the CPA3 antiporters (TC 2.A.63) subunit D family. In terms of assembly, may form a heterooligomeric complex that consists of seven subunits: mnhA2, mnhB2, mnhC2, mnhD2, mnhE2, mnhF2 and mnhG2.

The protein resides in the cell membrane. Functionally, expression of the mnh2 operon in E.coli is not able to catalyze Na(+)Li(+)/H(+) antiport. It does however confer higher growth rates than the control strain at up to pH 9.5. The operon may encode an NADH-ubiquinone oxidoreductase. This chain is Putative antiporter subunit mnhD2 (mnhD2), found in Staphylococcus aureus.